We begin with the raw amino-acid sequence, 208 residues long: Outer-membrane lipoprotein carrier protein (208 aa).

Positions 1-21 are cleaved as a signal peptide; sequence MPAFRYLIVLPLLCWGFASQA.

Belongs to the LolA family. As to quaternary structure, monomer.

The protein localises to the periplasm. Functionally, participates in the translocation of lipoproteins from the inner membrane to the outer membrane. Only forms a complex with a lipoprotein if the residue after the N-terminal Cys is not an aspartate (The Asp acts as a targeting signal to indicate that the lipoprotein should stay in the inner membrane). The sequence is that of Outer-membrane lipoprotein carrier protein from Methylococcus capsulatus (strain ATCC 33009 / NCIMB 11132 / Bath).